A 500-amino-acid polypeptide reads, in one-letter code: Probable cytosol aminopeptidase (500 aa).

Lysine 274 and aspartate 279 together coordinate Mn(2+). Residue lysine 286 is part of the active site. 3 residues coordinate Mn(2+): aspartate 297, aspartate 356, and glutamate 358. Arginine 360 is a catalytic residue.

Belongs to the peptidase M17 family. The cofactor is Mn(2+).

The protein resides in the cytoplasm. It catalyses the reaction Release of an N-terminal amino acid, Xaa-|-Yaa-, in which Xaa is preferably Leu, but may be other amino acids including Pro although not Arg or Lys, and Yaa may be Pro. Amino acid amides and methyl esters are also readily hydrolyzed, but rates on arylamides are exceedingly low.. It carries out the reaction Release of an N-terminal amino acid, preferentially leucine, but not glutamic or aspartic acids.. In terms of biological role, presumably involved in the processing and regular turnover of intracellular proteins. Catalyzes the removal of unsubstituted N-terminal amino acids from various peptides. The sequence is that of Probable cytosol aminopeptidase from Saccharophagus degradans (strain 2-40 / ATCC 43961 / DSM 17024).